Here is a 243-residue protein sequence, read N- to C-terminus: NAD-dependent protein deacetylase (243 aa).

In terms of domain architecture, Deacetylase sirtuin-type spans 1–243 (MKHDLETLKH…VSVVKSLMTE (243 aa)). NAD(+) is bound by residues Ala-24, Phe-35, Arg-36, Gln-105, Ile-107, Asp-108, and His-123. A nicotinamide-binding site is contributed by Phe-35. Nicotinamide contacts are provided by Ile-107 and Asp-108. His-123 acts as the Proton acceptor in catalysis. Zn(2+) contacts are provided by Cys-131, Cys-134, Cys-151, and Cys-154. Residues Ser-192, Ser-193, Asn-215, and Asp-232 each coordinate NAD(+).

Belongs to the sirtuin family. Class U subfamily. It depends on Zn(2+) as a cofactor.

Its subcellular location is the cytoplasm. The enzyme catalyses N(6)-acetyl-L-lysyl-[protein] + NAD(+) + H2O = 2''-O-acetyl-ADP-D-ribose + nicotinamide + L-lysyl-[protein]. NAD-dependent protein deacetylase which modulates the activities of several enzymes which are inactive in their acetylated form. The protein is NAD-dependent protein deacetylase of Staphylococcus aureus (strain COL).